Reading from the N-terminus, the 70-residue chain is Sec-independent protein translocase protein TatA (70 aa).

A helical membrane pass occupies residues 1 to 21; sequence MFGLGGQELLLILLIILLLFG. The segment at 47–70 is disordered; the sequence is EDEFNKAMSDPPEKKEKESPSDKG. Over residues 57 to 70 the composition is skewed to basic and acidic residues; sequence PPEKKEKESPSDKG.

The protein belongs to the TatA/E family. In terms of assembly, forms a complex with TatC.

Its subcellular location is the cell inner membrane. Functionally, part of the twin-arginine translocation (Tat) system that transports large folded proteins containing a characteristic twin-arginine motif in their signal peptide across membranes. TatA could form the protein-conducting channel of the Tat system. The polypeptide is Sec-independent protein translocase protein TatA (Prosthecochloris aestuarii (strain DSM 271 / SK 413)).